Consider the following 201-residue polypeptide: Inner membrane protein YnbA (201 aa).

Topologically, residues 1 to 43 (MTLYQIKPLFQSLLRPTMFWLYKHHVTANHITLAALALSLLTG) are periplasmic. The helical transmembrane segment at 44-64 (LLLMLAAQPILFLLLPIVLFI) threads the bilayer. Residues 65 to 84 (RMALNALDGMLARECNQQTR) are Cytoplasmic-facing. A helical transmembrane segment spans residues 85-107 (LGAILNETGDVISDIALYLPFLF). Residues 108–116 (LPESNASLV) lie on the Periplasmic side of the membrane. Residues 117-139 (ILMLFCTILTEFCGLLAQTINGV) traverse the membrane as a helical segment. Residues 140-151 (RSYAGPFGKSDR) are Cytoplasmic-facing. The helical transmembrane segment at 152-172 (ALIFGLWGLAVAIYPQWMQWN) threads the bilayer. The Periplasmic portion of the chain corresponds to 173-175 (NLL). A helical membrane pass occupies residues 176–196 (WSIASILLLWTAINRCRSVLL). Topologically, residues 197 to 201 (MSAEI) are cytoplasmic.

Its subcellular location is the cell inner membrane. The protein is Inner membrane protein YnbA (ynbA) of Escherichia coli (strain K12).